Here is a 408-residue protein sequence, read N- to C-terminus: Arginine biosynthesis bifunctional protein ArgJ (408 aa).

T156, K182, T193, E279, N403, and S408 together coordinate substrate. Residue T193 is the Nucleophile of the active site.

Belongs to the ArgJ family. As to quaternary structure, heterotetramer of two alpha and two beta chains.

It localises to the cytoplasm. The catalysed reaction is N(2)-acetyl-L-ornithine + L-glutamate = N-acetyl-L-glutamate + L-ornithine. It carries out the reaction L-glutamate + acetyl-CoA = N-acetyl-L-glutamate + CoA + H(+). The protein operates within amino-acid biosynthesis; L-arginine biosynthesis; L-ornithine and N-acetyl-L-glutamate from L-glutamate and N(2)-acetyl-L-ornithine (cyclic): step 1/1. Its pathway is amino-acid biosynthesis; L-arginine biosynthesis; N(2)-acetyl-L-ornithine from L-glutamate: step 1/4. Catalyzes two activities which are involved in the cyclic version of arginine biosynthesis: the synthesis of N-acetylglutamate from glutamate and acetyl-CoA as the acetyl donor, and of ornithine by transacetylation between N(2)-acetylornithine and glutamate. This Bordetella bronchiseptica (strain ATCC BAA-588 / NCTC 13252 / RB50) (Alcaligenes bronchisepticus) protein is Arginine biosynthesis bifunctional protein ArgJ.